Reading from the N-terminus, the 114-residue chain is Ribonuclease P protein component (114 aa).

It belongs to the RnpA family. In terms of assembly, consists of a catalytic RNA component (M1 or rnpB) and a protein subunit.

It catalyses the reaction Endonucleolytic cleavage of RNA, removing 5'-extranucleotides from tRNA precursor.. In terms of biological role, RNaseP catalyzes the removal of the 5'-leader sequence from pre-tRNA to produce the mature 5'-terminus. It can also cleave other RNA substrates such as 4.5S RNA. The protein component plays an auxiliary but essential role in vivo by binding to the 5'-leader sequence and broadening the substrate specificity of the ribozyme. This Legionella pneumophila (strain Lens) protein is Ribonuclease P protein component.